Reading from the N-terminus, the 503-residue chain is ATP synthase subunit alpha (503 aa).

An ATP-binding site is contributed by 169 to 176 (GDRKTGKT).

It belongs to the ATPase alpha/beta chains family. F-type ATPases have 2 components, CF(1) - the catalytic core - and CF(0) - the membrane proton channel. CF(1) has five subunits: alpha(3), beta(3), gamma(1), delta(1), epsilon(1). CF(0) has three main subunits: a(1), b(2) and c(9-12). The alpha and beta chains form an alternating ring which encloses part of the gamma chain. CF(1) is attached to CF(0) by a central stalk formed by the gamma and epsilon chains, while a peripheral stalk is formed by the delta and b chains.

Its subcellular location is the cell membrane. It carries out the reaction ATP + H2O + 4 H(+)(in) = ADP + phosphate + 5 H(+)(out). In terms of biological role, produces ATP from ADP in the presence of a proton gradient across the membrane. The alpha chain is a regulatory subunit. This Lactobacillus delbrueckii subsp. bulgaricus (strain ATCC 11842 / DSM 20081 / BCRC 10696 / JCM 1002 / NBRC 13953 / NCIMB 11778 / NCTC 12712 / WDCM 00102 / Lb 14) protein is ATP synthase subunit alpha.